The primary structure comprises 340 residues: Arginase 1, mitochondrial (340 aa).

A mitochondrion-targeting transit peptide spans 1 to 24; sequence MGGVAAGTRWIHHVRRLSAAKVSA. Mn(2+) is bound by residues His159, Asp183, His185, and Asp187. Substrate is bound by residues 185–189 and 193–195; these read HPDIY and EGN. Mn(2+) is bound by residues Asp268 and Asp270. Glu311 lines the substrate pocket.

The protein belongs to the arginase family. Requires Mn(2+) as cofactor.

It localises to the mitochondrion. It catalyses the reaction L-arginine + H2O = urea + L-ornithine. It participates in nitrogen metabolism; urea cycle; L-ornithine and urea from L-arginine: step 1/1. Functionally, catalyzes the hydrolysis of L-arginine to urea and L-ornithine. The latter can be utilized in the urea cycle or as a precursor for the synthesis of both polyamines and proline. This Oryza sativa subsp. japonica (Rice) protein is Arginase 1, mitochondrial (ARG1).